The chain runs to 793 residues: E3 UFM1-protein ligase 1 (793 aa).

Alanine 2 bears the N-acetylalanine mark. The interval 2 to 200 (ADAWEEIRRL…RGLFSAITRP (199 aa)) is mediates interaction with DDRGK1. Residues 2 to 212 (ADAWEEIRRL…VNSLISKYGF (211 aa)) form a required for E3 UFM1-protein ligase activity region. The tract at residues 121–250 (DRLAEEVNDK…KAVFVPDIYS (130 aa)) is involved in CDK5RAP3-binding. Residues 200-400 (PTAVNSLISK…NPVHLITEED (201 aa)) are mediates interaction with TRIP4. The interval 407–473 (LESVSTSKKD…SSHTGKKKPE (67 aa)) is disordered. Arginine 433 bears the Omega-N-methylarginine mark. Position 458 is a phosphoserine (serine 458). The interval 490 to 684 (IQDAPEEFIS…QLKVTEDPAL (195 aa)) is mediates interaction with CDK5RAP3. The residue at position 536 (threonine 536) is a Phosphothreonine.

It belongs to the UFL1 family. As to quaternary structure, catalytic component of the UFM1 ribosome E3 ligase (UREL) complex, composed of UFL1, DDRGK1 and CDK5RAP3. Interacts with E2-like enzyme UFC1. Interacts with RELA. Interacts with NBN; promoting recruitment to double-strand breaks following DNA damage. Interacts (when phosphorylated) with YWHAG/14-3-3-gamma; sequestering UFL1 and preventing its association with PDCD1/PD-1 substrate. Ubiquitinated, leading to its degradation by the proteasome. Interaction with CDK5RAP3 protects both proteins against ubiquitination and degradation via the proteasome. In terms of processing, phosphorylation at Thr-536 by AMPK promotes its interaction with YWHAG/14-3-3-gamma, thereby preventing UFL1 association with PDCD1/PD-1 substrate.

It is found in the endoplasmic reticulum membrane. It localises to the cytoplasm. The protein resides in the cytosol. Its subcellular location is the nucleus. The protein localises to the chromosome. E3 protein ligase that mediates ufmylation, the covalent attachment of the ubiquitin-like modifier UFM1 to lysine residues on target proteins, and which plays a key role in various processes, such as ribosome recycling, response to DNA damage, interferon response or reticulophagy (also called ER-phagy). Catalyzes ufmylation of many protein, such as CD274/PD-L1, CDK5RAP3, CYB5R3, DDRGK1, EIF6, histone H4, MRE11, P4HB, PDCD1/PD-1, TRIP4, RPN1, RPS20/uS10, RPL10/uL16, RPL26/uL24, SYVN1/HRD1 and TP53/p53. As part of the UREL complex, plays a key role in ribosome recycling by catalyzing mono-ufmylation of RPL26/uL24 subunit of the 60S ribosome. Ufmylation of RPL26/uL24 occurs on free 60S ribosomes following ribosome dissociation: it weakens the junction between post-termination 60S subunits and SEC61 translocons, promoting release and recycling of the large ribosomal subunit from the endoplasmic reticulum membrane. Ufmylation of RPL26/uL24 and subsequent 60S ribosome recycling either take place after normal termination of translation or after ribosome stalling during cotranslational translocation at the endoplasmic reticulum. Involved in reticulophagy in response to endoplasmic reticulum stress by mediating ufmylation of proteins such as CYB5R3 and RPN1, thereby promoting lysosomal degradation of ufmylated proteins. Ufmylation in response to endoplasmic reticulum stress is essential for processes such as hematopoiesis, blood vessel morphogenesis or inflammatory response. Mediates ufmylation of DDRGK1 and CDK5RAP3; the role of these modifications is however unclear: as both DDRGK1 and CDK5RAP3 act as substrate adapters for ufmylation, it is uncertain whether ufmylation of these proteins is, a collateral effect or is required for ufmylation. Acts as a negative regulator of T-cell activation by mediating ufmylation and stabilization of PDCD1/PD-1. Also involved in the response to DNA damage: recruited to double-strand break sites following DNA damage and mediates monoufmylation of histone H4 and ufmylation of MRE11. Mediates ufmylation of TP53/p53, promoting its stability. Catalyzes ufmylation of TRIP4, thereby playing a role in nuclear receptor-mediated transcription. Required for hematopoietic stem cell function and hematopoiesis. In Macaca fascicularis (Crab-eating macaque), this protein is E3 UFM1-protein ligase 1.